The primary structure comprises 806 residues: U4/U6.U5 tri-snRNP-associated protein 1 (806 aa).

The segment at 1 to 121 (MGSSKKHRGE…SGDASSLSIE (121 aa)) is disordered. Residues 32-42 (HREHKKHKHRS) show a composition bias toward basic residues. Residues 58–101 (ERGSERGSGRRGAEAEARSGAHGRERSQAEPSERRVKREKRDDG) are compositionally biased toward basic and acidic residues. Residues 104 to 119 (AAASSKASSGDASSLS) show a composition bias toward low complexity. Glycyl lysine isopeptide (Lys-Gly) (interchain with G-Cter in SUMO2) cross-links involve residues lysine 125 and lysine 133. Lysine 141 participates in a covalent cross-link: Glycyl lysine isopeptide (Lys-Gly) (interchain with G-Cter in SUMO1); alternate. Lysine 141 is covalently cross-linked (Glycyl lysine isopeptide (Lys-Gly) (interchain with G-Cter in SUMO2); alternate). Residues lysine 147 and lysine 188 each participate in a glycyl lysine isopeptide (Lys-Gly) (interchain with G-Cter in SUMO2) cross-link. A coiled-coil region spans residues 157–231 (NPMALRQREE…KLLEEMDQEF (75 aa)). Threonine 189 carries the phosphothreonine modification. A Glycyl lysine isopeptide (Lys-Gly) (interchain with G-Cter in SUMO2) cross-link involves residue lysine 277. Serine 321 carries the phosphoserine modification. Residues lysine 329 and lysine 336 each participate in a glycyl lysine isopeptide (Lys-Gly) (interchain with G-Cter in SUMO2) cross-link. A Phosphoserine modification is found at serine 348. Glycyl lysine isopeptide (Lys-Gly) (interchain with G-Cter in SUMO2) cross-links involve residues lysine 400 and lysine 414. A disordered region spans residues 418-504 (MRADDLLPLG…GLEEDEAELE (87 aa)). Residue threonine 430 is modified to Phosphothreonine. The span at 450 to 460 (VEEEALEDEEK) shows a compositional bias: acidic residues. Phosphoserine is present on residues serine 480, serine 492, and serine 527. Residues 494–540 (EGLEEDEAELELQKQLEKGRRLRQLQQLQQLRDSGEKVLEIVKKLES) are a coiled coil. Lysine 554 is covalently cross-linked (Glycyl lysine isopeptide (Lys-Gly) (interchain with G-Cter in SUMO2)). Positions 578 to 610 (AGNREEQEELMDFERDEERSANGGSESDGEENI) are disordered. Phosphoserine is present on residues serine 597, serine 602, serine 604, and serine 627. Residues lysine 654, lysine 663, and lysine 690 each participate in a glycyl lysine isopeptide (Lys-Gly) (interchain with G-Cter in SUMO2) cross-link. Threonine 701 carries the phosphothreonine modification. Residues lysine 705, lysine 715, lysine 729, lysine 755, and lysine 764 each participate in a glycyl lysine isopeptide (Lys-Gly) (interchain with G-Cter in SUMO2) cross-link. The residue at position 767 (serine 767) is a Phosphoserine. Position 770 is a phosphothreonine (threonine 770). Glycyl lysine isopeptide (Lys-Gly) (interchain with G-Cter in SUMO2) cross-links involve residues lysine 781 and lysine 786. Residue serine 795 is modified to Phosphoserine. Residue lysine 797 forms a Glycyl lysine isopeptide (Lys-Gly) (interchain with G-Cter in SUMO2) linkage.

This sequence belongs to the SNU66/SART1 family. As to quaternary structure, identified in the spliceosome C complex. Component of the U4/U6-U5 tri-snRNP complex composed of the U4, U6 and U5 snRNAs and at least PRPF3, PRPF4, PRPF6, PRPF8, PRPF31, SNRNP200, TXNL4A, SNRNP40, DDX23, CD2BP2, PPIH, SNU13, EFTUD2, SART1 and USP39. Interacts with UBL5. Interacts with IVNS1ABP (via Kelch repeats). Sumoylated with SUMO2. In terms of tissue distribution, ubiquitously expressed. Shows a high expression in fetal liver and a low expression in adult liver.

The protein resides in the nucleus. Plays a role in mRNA splicing as a component of the U4/U6-U5 tri-snRNP, one of the building blocks of the spliceosome. May also bind to DNA. In Mus musculus (Mouse), this protein is U4/U6.U5 tri-snRNP-associated protein 1 (Sart1).